Consider the following 218-residue polypeptide: Attacin-B (218 aa).

An N-terminal signal peptide occupies residues methionine 1–alanine 17. A propeptide spanning residues valine 18–arginine 28 is cleaved from the precursor.

This sequence belongs to the attacin/sarcotoxin-2 family. In terms of tissue distribution, hemolymph (at protein level).

The protein localises to the secreted. Hemolymph antibacterial protein. This chain is Attacin-B (AttB), found in Drosophila melanogaster (Fruit fly).